Reading from the N-terminus, the 487-residue chain is Neuronal immunoglobulin domain-containing protein rig-3 (487 aa).

The first 23 residues, 1-23 (MGRLLAKMLFPLAMCLFVSAVSA), serve as a signal peptide directing secretion. 2 Ig-like domains span residues 34–139 (PIVI…KTIK) and 247–354 (PEFE…PKVT). Disulfide bonds link cysteine 61–cysteine 124 and cysteine 271–cysteine 327. Residue aspartate 466 is the site of GPI-anchor amidated aspartate attachment. A propeptide spans 467–487 (SASDSKFPLALATLFFVCLFI) (removed in mature form).

As to expression, expressed in the cholinergic motor neurons AS, VA and DA in the ventral nerve cord and in the mechanosensory ALM neurons in the midbody.

The protein resides in the cell projection. The protein localises to the axon. Its subcellular location is the synapse. It localises to the cell membrane. Functionally, cell surface protein which plays a role in the plasticity of cholinergic synapses at neuromuscular junctions and in the polarity of the mechanosensory neuron ALM, possibly by antagonizing Wnt signaling. In Caenorhabditis elegans, this protein is Neuronal immunoglobulin domain-containing protein rig-3.